The following is a 70-amino-acid chain: ATP synthase subunit c (70 aa).

2 consecutive transmembrane segments (helical) span residues 4–24 (IAAA…NGLI) and 45–65 (IMFI…VIAF).

Belongs to the ATPase C chain family. In terms of assembly, F-type ATPases have 2 components, F(1) - the catalytic core - and F(0) - the membrane proton channel. F(1) has five subunits: alpha(3), beta(3), gamma(1), delta(1), epsilon(1). F(0) has three main subunits: a(1), b(2) and c(10-14). The alpha and beta chains form an alternating ring which encloses part of the gamma chain. F(1) is attached to F(0) by a central stalk formed by the gamma and epsilon chains, while a peripheral stalk is formed by the delta and b chains.

It localises to the cell membrane. F(1)F(0) ATP synthase produces ATP from ADP in the presence of a proton or sodium gradient. F-type ATPases consist of two structural domains, F(1) containing the extramembraneous catalytic core and F(0) containing the membrane proton channel, linked together by a central stalk and a peripheral stalk. During catalysis, ATP synthesis in the catalytic domain of F(1) is coupled via a rotary mechanism of the central stalk subunits to proton translocation. Functionally, key component of the F(0) channel; it plays a direct role in translocation across the membrane. A homomeric c-ring of between 10-14 subunits forms the central stalk rotor element with the F(1) delta and epsilon subunits. In Staphylococcus haemolyticus (strain JCSC1435), this protein is ATP synthase subunit c.